We begin with the raw amino-acid sequence, 385 residues long: MNPVPAQREYFLDSIRAWLMLLGIPFHISLIYSSHTWHVNSAEPSLWLTLFNDFIHSFRMQVFFVISGYFSYMLFLRYPLKKWWKVRVERVGIPMLTAIPLLTLPQFIMLQYVKGKAESWPGLSLYDKYNTLAWELISHLWFLLVLVVMTTLCVWIFKRIRNNLENSDKTNKKFSMVKLSVIFLCLGIGYAVIRRTIFIVYPPILSNGMFNFIVMQTLFYLPFFILGALAFIFPHLKALFTTPSRGCTLAAALAFVAYLLNQRYGSGDAWMYETESVITMVLGLWMVNVVFSFGHRLLNFQSARVTYFVNASLFIYLVHHPLTLFFGAYITPHITSNWLGFLCGLIFVVGIAIILYEIHLRIPLLKFLFSGKPVVKRENDKAPAR.

Transmembrane regions (helical) follow at residues 17–37 (AWLM…SHTW), 60–80 (MQVF…RYPL), 91–111 (VGIP…IMLQ), 137–157 (ISHL…VWIF), 173–193 (KFSM…YAVI), 212–232 (FIVM…LAFI), 239–259 (LFTT…VAYL), 274–294 (TESV…FSFG), 311–331 (ASLF…AYIT), and 338–358 (WLGF…LYEI).

The protein belongs to the acyltransferase 3 family. OpgC subfamily.

It localises to the cell membrane. It functions in the pathway glycan metabolism; osmoregulated periplasmic glucan (OPG) biosynthesis. Its function is as follows. Necessary for the succinyl substitution of periplasmic glucans. Could catalyze the transfer of succinyl residues from the cytoplasmic side of the membrane to the nascent glucan backbones on the periplasmic side of the membrane. The chain is Glucans biosynthesis protein C from Shigella sonnei (strain Ss046).